The sequence spans 891 residues: Bifunctional aldehyde-alcohol dehydrogenase AdhE (891 aa).

An aldehyde dehydrogenase region spans residues 2 to 440 (AVTNVAELNA…ENVGPKHLIN (439 aa)). NAD(+) is bound by residues 110–115 (IVPTTN), Gly-195, and Gly-213. Cys-246 (nucleophile) is an active-site residue. NAD(+)-binding residues include Glu-335 and Leu-419. The tract at residues 441–448 (KKTVAKRA) is linker. An alcohol dehydrogenase region spans residues 449–891 (ENMLWHKLPK…KAEKKAKKSA (443 aa)). NAD(+) contacts are provided by residues Asp-487, Asp-519, 546 to 550 (GSPMD), 597 to 598 (TT), Val-610, Lys-619, and Leu-638. The Fe cation site is built by Asp-653, His-657, His-723, and His-737.

In the N-terminal section; belongs to the aldehyde dehydrogenase family. The protein in the C-terminal section; belongs to the iron-containing alcohol dehydrogenase family. As to quaternary structure, forms long filaments, called spirosomes. Requires Fe(2+) as cofactor.

The enzyme catalyses acetaldehyde + NAD(+) + CoA = acetyl-CoA + NADH + H(+). The catalysed reaction is ethanol + NAD(+) = acetaldehyde + NADH + H(+). It carries out the reaction a primary alcohol + NAD(+) = an aldehyde + NADH + H(+). In terms of biological role, under fermentative conditions, catalyzes the sequential NADH-dependent reduction of acetyl-CoA to acetaldehyde and then to ethanol. Plays an important role in virulence and is critical for proper regulation of virulence gene expression. The sequence is that of Bifunctional aldehyde-alcohol dehydrogenase AdhE from Escherichia coli O157:H7.